Consider the following 406-residue polypeptide: Argininosuccinate synthase (406 aa).

ATP is bound at residue 8–16; sequence AYSGGLDTS. Residue Tyr86 coordinates L-citrulline. Gly116 is a binding site for ATP. 3 residues coordinate L-aspartate: Thr118, Asn122, and Asp123. Asn122 is an L-citrulline binding site. 5 residues coordinate L-citrulline: Arg126, Ser174, Ser183, Glu259, and Tyr271.

Belongs to the argininosuccinate synthase family. Type 1 subfamily. Homotetramer.

The protein resides in the cytoplasm. It carries out the reaction L-citrulline + L-aspartate + ATP = 2-(N(omega)-L-arginino)succinate + AMP + diphosphate + H(+). Its pathway is amino-acid biosynthesis; L-arginine biosynthesis; L-arginine from L-ornithine and carbamoyl phosphate: step 2/3. The protein is Argininosuccinate synthase of Dehalococcoides mccartyi (strain ATCC BAA-2100 / JCM 16839 / KCTC 5957 / BAV1).